A 412-amino-acid chain; its full sequence is CCA-adding enzyme (412 aa).

ATP-binding residues include serine 41 and lysine 44. 2 residues coordinate CTP: serine 41 and lysine 44. Residues aspartate 53, aspartate 55, and aspartate 106 each contribute to the Mg(2+) site. 3 residues coordinate ATP: histidine 129, lysine 149, and tyrosine 158. 3 residues coordinate CTP: histidine 129, lysine 149, and tyrosine 158.

This sequence belongs to the tRNA nucleotidyltransferase/poly(A) polymerase family. Archaeal CCA-adding enzyme subfamily. Homodimer. It depends on Mg(2+) as a cofactor.

It catalyses the reaction a tRNA precursor + 2 CTP + ATP = a tRNA with a 3' CCA end + 3 diphosphate. The enzyme catalyses a tRNA with a 3' CCA end + 2 CTP + ATP = a tRNA with a 3' CCACCA end + 3 diphosphate. In terms of biological role, catalyzes the addition and repair of the essential 3'-terminal CCA sequence in tRNAs without using a nucleic acid template. Adds these three nucleotides in the order of C, C, and A to the tRNA nucleotide-73, using CTP and ATP as substrates and producing inorganic pyrophosphate. tRNA 3'-terminal CCA addition is required both for tRNA processing and repair. Also involved in tRNA surveillance by mediating tandem CCA addition to generate a CCACCA at the 3' terminus of unstable tRNAs. While stable tRNAs receive only 3'-terminal CCA, unstable tRNAs are marked with CCACCA and rapidly degraded. This chain is CCA-adding enzyme, found in Saccharolobus solfataricus (strain ATCC 35092 / DSM 1617 / JCM 11322 / P2) (Sulfolobus solfataricus).